A 53-amino-acid chain; its full sequence is ATP synthase protein 8 (53 aa).

The chain crosses the membrane as a helical span at residues 4 to 24 (MAPISWLLLFIVFSITFILFC).

This sequence belongs to the ATPase protein 8 family. As to quaternary structure, F-type ATPases have 2 components, CF(1) - the catalytic core - and CF(0) - the membrane proton channel.

Its subcellular location is the mitochondrion membrane. Mitochondrial membrane ATP synthase (F(1)F(0) ATP synthase or Complex V) produces ATP from ADP in the presence of a proton gradient across the membrane which is generated by electron transport complexes of the respiratory chain. F-type ATPases consist of two structural domains, F(1) - containing the extramembraneous catalytic core and F(0) - containing the membrane proton channel, linked together by a central stalk and a peripheral stalk. During catalysis, ATP synthesis in the catalytic domain of F(1) is coupled via a rotary mechanism of the central stalk subunits to proton translocation. Part of the complex F(0) domain. Minor subunit located with subunit a in the membrane. This chain is ATP synthase protein 8 (mt:ATPase8), found in Drosophila yakuba (Fruit fly).